The sequence spans 257 residues: Galactitol 2-dehydrogenase (257 aa).

Residues 21-23, 67-68, Asn94, Tyr162, and Lys166 contribute to the NAD(+) site; these read RAI and DV. The Proton acceptor role is filled by Tyr162.

It belongs to the short-chain dehydrogenases/reductases (SDR) family. As to quaternary structure, homotetramer. Mg(2+) is required as a cofactor.

The catalysed reaction is galactitol + NAD(+) = keto-D-tagatose + NADH + H(+). Its function is as follows. Catalyzes the oxidation of galactitol to D-tagatose. Also catalyzes the oxidation of a wide range of substrates, including polyvalent aliphatic alcohols and polyols, to the corresponding ketones and ketoses. Galactitol is the preferred substrate. The chain is Galactitol 2-dehydrogenase from Rhizobium johnstonii (strain DSM 114642 / LMG 32736 / 3841) (Rhizobium leguminosarum bv. viciae).